Consider the following 348-residue polypeptide: N6-Methyl-AMP deaminase (348 aa).

2 residues coordinate Zn(2+): His18 and His20. N(6)-methyl-AMP-binding positions include His20, Asn22, His68, 100-103, Asp142, and Gly175; that span reads STPR. His202 contributes to the Zn(2+) binding site. N(6)-methyl-AMP contacts are provided by Glu205, Asp287, and Asp288. Glu205 acts as the Proton donor in catalysis. Asp287 serves as a coordination point for Zn(2+).

The protein belongs to the metallo-dependent hydrolases superfamily. Adenosine and AMP deaminases family. As to quaternary structure, monomer. Requires Zn(2+) as cofactor.

It carries out the reaction N(6)-methyl-AMP + H2O + H(+) = IMP + methylamine. Functionally, catalyzes the hydrolysis of the free cytosolic methylated adenosine nucleotide N(6)-methyl-AMP (N6-mAMP) to produce inositol monophosphate (IMP) and methylamine. Is required for the catabolism of cytosolic N6-mAMP, which is derived from the degradation of mRNA containing N6-methylated adenine (m6A). The chain is N6-Methyl-AMP deaminase (mapda) from Danio rerio (Zebrafish).